A 265-amino-acid chain; its full sequence is MSASCFCNKKNDQISKLDDSLLDANDPNHPANLICELCRLFYDNNWVTGTGGGISIRDVKGENPNLVYIAPSGIQKEKLQPWEMFVVELPDEKLLRTPNDCPAELTKSYKYKPSACTPLFMSCYTMRDAGACIHTHSQNAVMCSLLWGDKVEFEISHIEQIKALPKLAVNEKTGKVEKVGSMQYFDKLVLPIIENTPHEEDLTDSLQEAIKNYPGTTAVLVRRHGIYVWGEDVWKAKVYNEALDYLLELAVKMKQSGIPTTTQTD.

Cys116 lines the substrate pocket. Zn(2+) is bound by residues His134 and His136. Glu159 acts as the Proton donor/acceptor in catalysis. Residue His224 coordinates Zn(2+).

The protein belongs to the aldolase class II family. MtnB subfamily. Zn(2+) serves as cofactor.

It localises to the cytoplasm. The catalysed reaction is 5-(methylsulfanyl)-D-ribulose 1-phosphate = 5-methylsulfanyl-2,3-dioxopentyl phosphate + H2O. It functions in the pathway amino-acid biosynthesis; L-methionine biosynthesis via salvage pathway; L-methionine from S-methyl-5-thio-alpha-D-ribose 1-phosphate: step 2/6. Catalyzes the dehydration of methylthioribulose-1-phosphate (MTRu-1-P) into 2,3-diketo-5-methylthiopentyl-1-phosphate (DK-MTP-1-P). This is Methylthioribulose-1-phosphate dehydratase from Debaryomyces hansenii (strain ATCC 36239 / CBS 767 / BCRC 21394 / JCM 1990 / NBRC 0083 / IGC 2968) (Yeast).